A 102-amino-acid polypeptide reads, in one-letter code: NADH-quinone oxidoreductase subunit K 1 (102 aa).

Transmembrane regions (helical) follow at residues 6-26, 31-51, and 65-85; these read LNAYVALSAVLFALGGIGVLV, LAILMCIELMLNAANLLFVAF, and FLVITVAAAEVAIGLALTVLL.

This sequence belongs to the complex I subunit 4L family. NDH-1 is composed of 14 different subunits. Subunits NuoA, H, J, K, L, M, N constitute the membrane sector of the complex.

The protein resides in the cell membrane. The enzyme catalyses a quinone + NADH + 5 H(+)(in) = a quinol + NAD(+) + 4 H(+)(out). NDH-1 shuttles electrons from NADH, via FMN and iron-sulfur (Fe-S) centers, to quinones in the respiratory chain. The immediate electron acceptor for the enzyme in this species is believed to be a menaquinone. Couples the redox reaction to proton translocation (for every two electrons transferred, four hydrogen ions are translocated across the cytoplasmic membrane), and thus conserves the redox energy in a proton gradient. The sequence is that of NADH-quinone oxidoreductase subunit K 1 from Symbiobacterium thermophilum (strain DSM 24528 / JCM 14929 / IAM 14863 / T).